A 628-amino-acid chain; its full sequence is E3 SUMO-protein ligase PIAS3 (628 aa).

Residues 1–200 (MAELGELKHM…QLRFCLCETS (200 aa)) are interaction with CCAR2. Positions 11–45 (VMSFRVSELQVLLGFAGRNKSGRKHELLAKALHLL) constitute an SAP domain. Residues 19 to 23 (LQVLL) carry the LXXLL motif motif. Residues Lys46, Lys56, Lys230, and Lys307 each participate in a glycyl lysine isopeptide (Lys-Gly) (interchain with G-Cter in SUMO2) cross-link. A PINIT domain is found at 115–280 (MHPPLPQPVH…SLSVYLVRQL (166 aa)). The SP-RING-type zinc-finger motif lies at 312–393 (PDSEVATTSL…FMEILNSCSD (82 aa)). 4 residues coordinate Zn(2+): Cys343, His345, Cys366, and Cys369. Residues 450–460 (LTIESSSDEED) are SUMO1-binding. Glycyl lysine isopeptide (Lys-Gly) (interchain with G-Cter in SUMO2) cross-links involve residues Lys466 and Lys482. The disordered stretch occupies residues 571-628 (GPLAPTLGSSHRSSTPAPPPGRVSSIVAPGSSLREGHGGPLPSGPSLTGCRSDVISLD).

Belongs to the PIAS family. In terms of assembly, monomer. Interacts with PLAG1 and ZFHX3. Interacts with STAT5A; the interaction occurs on stimulation by PRL. Binds SUMO1 and UBE2I. Interacts with AR, BCL11A, HMGA2, IRF1 and NCOA2. Interacts with MITF; the interaction inhibits the transcriptional activity of MITF. Interacts with STAT3; the interaction occurs on stimulation by IL6, CNTF or OSM and inhibits the DNA binding activity of STAT3. Interacts with GFI1; the interaction relieves the inhibitory effect of PIAS3 on STAT3-mediated transcriptional activity. Interacts with MTA1. Interacts with CCAR2 (via N-terminus). Interacts with TRIM8. Interacts with PRDM1. Sumoylated. As to expression, expressed in kidney, heart, spleen, brain and cerebellum; weak expression, if any, in liver and lung.

Its subcellular location is the cytoplasm. The protein localises to the nucleus. The protein resides in the nucleus speckle. It participates in protein modification; protein sumoylation. Functions as an E3-type small ubiquitin-like modifier (SUMO) ligase, stabilizing the interaction between UBE2I and the substrate, and as a SUMO-tethering factor. Plays a crucial role as a transcriptional coregulation in various cellular pathways, including the STAT pathway and the steroid hormone signaling pathway. Repressor of STAT3 signaling via inhibiting STAT3 DNA-binding and suppressing cell growth. Repressor of MITF transcriptional activity. Enhances the sumoylation of MTA1 and may participate in its paralog-selective sumoylation. Sumoylates CCAR2 which promotes its interaction with SIRT1. Diminishes the sumoylation of ZFHX3 by preventing the colocalization of ZFHX3 with SUMO1 in the nucleus. The protein is E3 SUMO-protein ligase PIAS3 (Pias3) of Mus musculus (Mouse).